Here is a 794-residue protein sequence, read N- to C-terminus: K(+)-insensitive pyrophosphate-energized proton pump (794 aa).

The next 5 helical transmembrane spans lie at 20–40, 74–94, 102–122, 163–183, and 194–214; these read ALVAVIAVVALAALVLAGVLV, TLGVFAVVVFFLLMLLPADDW, IFFLIGAAFSAATGYIGMWLA, GVVGMFTVGLGLLGACCVVLV, and GFGLGAALIAMFMRVGGGIFT. Position 215 (K215) interacts with substrate. Positions 218, 222, 245, and 248 each coordinate Mg(2+). 6 helical membrane passes run 264-284, 285-305, 321-341, 365-385, 422-442, and 446-466; these read YAVTLVAALILGKVAFGDFGL, AFPLLVPAIGVLTAMIGIFAV, GFFISAVISLVLVAVAVFVYL, ILALVAVAIGIVLAALIQQLT, AVYTALLIGLGVYGAFLLGGT, and LALFAVALAGTGLLTTVGVIV. A Mg(2+)-binding site is contributed by D476. Transmembrane regions (helical) follow at residues 508–528, 564–584, and 641–661; these read AITKGIAIATAVLAAAALFGS, VGLIAGAAVVFLFSGLAINAV, and IFIGFTLGVGALGAFLAGAIG. Ca(2+) contacts are provided by D678, D704, and D708. Residue K711 participates in substrate binding. Helical transmembrane passes span 717 to 737 and 747 to 767; these read AINPLLKVMNLVALLIAPAVI and VVVRVLIAVVAFAVIAAAVYV.

Belongs to the H(+)-translocating pyrophosphatase (TC 3.A.10) family. K(+)-insensitive subfamily. Homodimer. Requires Mg(2+) as cofactor.

It is found in the cell membrane. It carries out the reaction diphosphate + H2O + H(+)(in) = 2 phosphate + 2 H(+)(out). Its function is as follows. Proton pump that utilizes the energy of pyrophosphate hydrolysis as the driving force for proton movement across the membrane. Generates a proton motive force. The sequence is that of K(+)-insensitive pyrophosphate-energized proton pump from Streptomyces coelicolor (strain ATCC BAA-471 / A3(2) / M145).